We begin with the raw amino-acid sequence, 297 residues long: 4-diphosphocytidyl-2-C-methyl-D-erythritol kinase (297 aa).

K22 is an active-site residue. Position 111–121 (111–121) interacts with ATP; it reads PSQAGMGGGSS. D153 is a catalytic residue.

It belongs to the GHMP kinase family. IspE subfamily.

It carries out the reaction 4-CDP-2-C-methyl-D-erythritol + ATP = 4-CDP-2-C-methyl-D-erythritol 2-phosphate + ADP + H(+). Its pathway is isoprenoid biosynthesis; isopentenyl diphosphate biosynthesis via DXP pathway; isopentenyl diphosphate from 1-deoxy-D-xylulose 5-phosphate: step 3/6. In terms of biological role, catalyzes the phosphorylation of the position 2 hydroxy group of 4-diphosphocytidyl-2C-methyl-D-erythritol. The protein is 4-diphosphocytidyl-2-C-methyl-D-erythritol kinase of Polaromonas naphthalenivorans (strain CJ2).